Here is a 251-residue protein sequence, read N- to C-terminus: MENNKKVLKKMVFFVLVTFLGLTISQEVFAQQDPDPSQLHRSSLVKNLQNIYFLYEGDPVTHENVKSVDQLLSHDLIYNVSGPNYDKLKTELKNQEMATLFKDKNVDIYGVEYYHLCYLCENAERSACIYGGVTNHEGNHLEIPKKIVVKVSIDGIQSLSFDIETNKKMVTAQELDYKVRKYLTDNKQLYTNGPSKYETGYIKFIPKNKESFWFDFFPEPEFTQSKYLMIYKDNETLDSNTSQIEVYLTTK.

An N-terminal signal peptide occupies residues methionine 1–alanine 30. Cysteine 117 and cysteine 128 are disulfide-bonded.

This sequence belongs to the staphylococcal/streptococcal toxin family.

Functionally, causative agent of the symptoms associated with scarlet fever, have been associated with streptococcal toxic shock-like disease and may play a role in the early events of rheumatic fever. The polypeptide is Exotoxin type A (speA) (Streptococcus pyogenes serotype M18 (strain MGAS8232)).